A 975-amino-acid chain; its full sequence is Synaptopodin 2-like protein (975 aa).

Residues 6-85 enclose the PDZ domain; sequence EVQVTLAGGA…QLVLTVRRVT (80 aa). Disordered regions lie at residues 18-41, 86-214, and 314-349; these read GFRLQGGTEQRKPLQIRRRSQAGR, DEGS…PAEA, and AGTGTEEEDGIPPTSESELDEETFSDARSLTNQSDW. Phosphoserine occurs at positions 105 and 108. T138 carries the phosphothreonine modification. Phosphoserine occurs at positions 140, 163, 175, and 177. Over residues 187–200 the composition is skewed to polar residues; it reads GSPSQGDSRVSSPS. Over residues 202–214 the composition is skewed to low complexity; sequence EEGAALQPPPAEA. Over residues 339–349 the composition is skewed to polar residues; that stretch reads DARSLTNQSDW. Phosphoserine is present on residues S342, S347, S371, S378, and S381. Residues R383, R463, R466, and R476 each carry the omega-N-methylarginine modification. The interval 491–649 is disordered; it reads KVNEGLGSTS…ETKNSPNPEL (159 aa). Pro residues predominate over residues 502–516; sequence APSPFAAPPQGPTPL. Over residues 519 to 528 the composition is skewed to polar residues; that stretch reads FTTVVPSHTP. 2 stretches are compositionally biased toward low complexity: residues 530–540 and 571–580; these read SGASSSTQRSS and SAAAMTSTAS. A phosphoserine mark is found at S667 and S675. Positions 687–731 are disordered; that stretch reads LGGRSYKTLPQVSPKTPPPMAPKTPPPTTPKTPPPVAPKPGSRGL. Positions 701–724 are enriched in pro residues; the sequence is KTPPPMAPKTPPPTTPKTPPPVAP. 2 positions are modified to phosphothreonine: T702 and T710. The residue at position 754 (R754) is an Omega-N-methylarginine. The tract at residues 772–797 is disordered; it reads EATSGSSLNPGLRPRSPSPTPSLPPS. Phosphoserine occurs at positions 787 and 789. T791 is modified (phosphothreonine). Omega-N-methylarginine is present on residues R805, R825, and R888. S890 is subject to Phosphoserine. Phosphothreonine is present on residues T891 and T897. R909 is subject to Omega-N-methylarginine. The residue at position 920 (R920) is an Asymmetric dimethylarginine; alternate. An Omega-N-methylarginine; alternate modification is found at R920. Omega-N-methylarginine is present on residues R953 and R955.

Belongs to the synaptopodin family.

It is found in the cytoplasm. It localises to the cytoskeleton. Actin-associated protein that may play a role in modulating actin-based shape. This chain is Synaptopodin 2-like protein (Synpo2l), found in Mus musculus (Mouse).